A 74-amino-acid polypeptide reads, in one-letter code: MAKKDDIIEFEGEVIDTLPNTLFKVRLENGHEIIAHISGKMRKHYIRILTGDKVKVEMTPYDLTKGRITYRGKT.

Positions 1–73 (MAKKDDIIEF…TKGRITYRGK (73 aa)) constitute an S1-like domain.

Belongs to the IF-1 family. As to quaternary structure, component of the 30S ribosomal translation pre-initiation complex which assembles on the 30S ribosome in the order IF-2 and IF-3, IF-1 and N-formylmethionyl-tRNA(fMet); mRNA recruitment can occur at any time during PIC assembly.

The protein localises to the cytoplasm. Functionally, one of the essential components for the initiation of protein synthesis. Stabilizes the binding of IF-2 and IF-3 on the 30S subunit to which N-formylmethionyl-tRNA(fMet) subsequently binds. Helps modulate mRNA selection, yielding the 30S pre-initiation complex (PIC). Upon addition of the 50S ribosomal subunit IF-1, IF-2 and IF-3 are released leaving the mature 70S translation initiation complex. In Psychrobacter sp. (strain PRwf-1), this protein is Translation initiation factor IF-1.